The following is a 442-amino-acid chain: Trigger factor (442 aa).

One can recognise a PPIase FKBP-type domain in the interval 163–248 (YDRVTINYCI…IIKIEKKQEL (86 aa)).

It belongs to the FKBP-type PPIase family. Tig subfamily.

The protein localises to the cytoplasm. The catalysed reaction is [protein]-peptidylproline (omega=180) = [protein]-peptidylproline (omega=0). Functionally, involved in protein export. Acts as a chaperone by maintaining the newly synthesized protein in an open conformation. Functions as a peptidyl-prolyl cis-trans isomerase. The chain is Trigger factor (tig) from Buchnera aphidicola subsp. Acyrthosiphon pisum (strain APS) (Acyrthosiphon pisum symbiotic bacterium).